The chain runs to 198 residues: Succinate dehydrogenase [ubiquinone] cytochrome b subunit, mitochondrial (198 aa).

Residues 1–50 constitute a mitochondrion transit peptide; the sequence is MSAMMVKLGLNKSALLLKPSAFSRAAALSSSRRLLFNTARTNFLSTSPLK. The Mitochondrial matrix segment spans residues 51–99; sequence NVASEMNTKAAIAEEQILNKQRAKRPISPHLTIYQPQLTWYLSSLHRIS. The a ubiquinone site is built by Ser93 and Arg97. A helical transmembrane segment spans residues 100 to 120; that stretch reads LVLMGLGFYLFTILFGVSGLL. The Mitochondrial intermembrane segment spans residues 121-139; sequence GLGLTTEKVSNWYHQKFSK. Residues 140–160 form a helical membrane-spanning segment; that stretch reads ITEWSIKGSFAYLFAIHYGGA. His156 lines the heme pocket. Over 161-175 the chain is Mitochondrial matrix; that stretch reads IRHLIWDTAKELTLK. A helical membrane pass occupies residues 176–196; the sequence is GVYRTGYALIGFTAVLGTYLL. Over 197–198 the chain is Mitochondrial intermembrane; that stretch reads TL.

It belongs to the cytochrome b560 family. In terms of assembly, forms part of complex II containing four subunits: a flavoprotein (FP), an iron-sulfur protein (IP) and a cytochrome b composed of two integral membrane proteins. The cofactor is heme.

It is found in the mitochondrion inner membrane. The protein operates within carbohydrate metabolism; tricarboxylic acid cycle. Functionally, membrane-anchoring mono-heme cytochrome b subunit of succinate dehydrogenase (SDH) that is involved in system II of the mitochondrial electron transport chain and is responsible for transferring electrons from succinate to ubiquinone (coenzyme Q). SDH3 and SDH4 form the membrane dimer that anchors the catalytic dimer formed by SDH1 and SDH2 to the matrix surface of the mitochondrial inner membrane. Electrons originating from the catalytic dimer enter the membrane dimer for ubiquinone reduction. The polypeptide is Succinate dehydrogenase [ubiquinone] cytochrome b subunit, mitochondrial (SDH3) (Saccharomyces cerevisiae (strain ATCC 204508 / S288c) (Baker's yeast)).